The following is a 424-amino-acid chain: L-glutamine:2-deoxy-scyllo-inosose aminotransferase (424 aa).

K202 is subject to N6-(pyridoxal phosphate)lysine.

Belongs to the DegT/DnrJ/EryC1 family. L-glutamine:2-deoxy-scyllo-inosose/scyllo-inosose aminotransferase subfamily. Pyridoxal 5'-phosphate serves as cofactor.

The catalysed reaction is 2-deoxy-L-scyllo-inosose + L-glutamine = 2-deoxy-scyllo-inosamine + 2-oxoglutaramate. The enzyme catalyses 3-amino-2,3-dideoxy-scyllo-inosose + L-glutamine = 2-deoxystreptamine + 2-oxoglutaramate. Its pathway is metabolic intermediate biosynthesis; 2-deoxystreptamine biosynthesis; 2-deoxystreptamine from D-glucose 6-phosphate: step 2/4. It participates in antibiotic biosynthesis; tobramycin biosynthesis. Catalyzes the PLP-dependent transamination of 2-deoxy-scyllo-inosose (2-DOI) to form 2-deoxy-scyllo-inosamine (2-DOIA) using L-glutamine as the amino donor. Also catalyzes the transamination of 3-amino-2,3-dideoxy-scyllo-inosose (keto-2-DOIA) into 2-deoxystreptamine (2-DOS). The protein is L-glutamine:2-deoxy-scyllo-inosose aminotransferase (tbmB) of Streptoalloteichus tenebrarius (strain ATCC 17920 / DSM 40477 / JCM 4838 / CBS 697.72 / NBRC 16177 / NCIMB 11028 / NRRL B-12390 / A12253. 1 / ISP 5477) (Streptomyces tenebrarius).